A 346-amino-acid polypeptide reads, in one-letter code: UDP-3-O-acylglucosamine N-acyltransferase (346 aa).

His253 serves as the catalytic Proton acceptor.

It belongs to the transferase hexapeptide repeat family. LpxD subfamily. As to quaternary structure, homotrimer.

It carries out the reaction a UDP-3-O-[(3R)-3-hydroxyacyl]-alpha-D-glucosamine + a (3R)-hydroxyacyl-[ACP] = a UDP-2-N,3-O-bis[(3R)-3-hydroxyacyl]-alpha-D-glucosamine + holo-[ACP] + H(+). It functions in the pathway bacterial outer membrane biogenesis; LPS lipid A biosynthesis. In terms of biological role, catalyzes the N-acylation of UDP-3-O-acylglucosamine using 3-hydroxyacyl-ACP as the acyl donor. Is involved in the biosynthesis of lipid A, a phosphorylated glycolipid that anchors the lipopolysaccharide to the outer membrane of the cell. The chain is UDP-3-O-acylglucosamine N-acyltransferase from Rickettsia akari (strain Hartford).